A 62-amino-acid polypeptide reads, in one-letter code: Temporin-1PLa (62 aa).

Residues 1–22 (MFTSKKSLLLLFFLGTINLSLC) form the signal peptide. Positions 23–45 (EEERDADEEERRDDPDEMNVEVE) are excised as a propeptide. Residue Ile-60 is modified to Isoleucine amide.

In terms of tissue distribution, expressed by the skin glands.

The protein localises to the secreted. Antimicrobial activity against the Gram-positive bacterium S.aureus. In Lithobates palustris (Pickerel frog), this protein is Temporin-1PLa.